The chain runs to 188 residues: Putative 3-methyladenine DNA glycosylase (188 aa).

This sequence belongs to the DNA glycosylase MPG family.

In Ehrlichia ruminantium (strain Gardel), this protein is Putative 3-methyladenine DNA glycosylase.